The sequence spans 323 residues: Acetyl-coenzyme A carboxylase carboxyl transferase subunit alpha (323 aa).

Residues 40-293 (LSEKSLQLTK…RKALSDSLKT (254 aa)) enclose the CoA carboxyltransferase C-terminal domain.

It belongs to the AccA family. Acetyl-CoA carboxylase is a heterohexamer composed of biotin carboxyl carrier protein (AccB), biotin carboxylase (AccC) and two subunits each of ACCase subunit alpha (AccA) and ACCase subunit beta (AccD).

The protein localises to the cytoplasm. The enzyme catalyses N(6)-carboxybiotinyl-L-lysyl-[protein] + acetyl-CoA = N(6)-biotinyl-L-lysyl-[protein] + malonyl-CoA. It participates in lipid metabolism; malonyl-CoA biosynthesis; malonyl-CoA from acetyl-CoA: step 1/1. In terms of biological role, component of the acetyl coenzyme A carboxylase (ACC) complex. First, biotin carboxylase catalyzes the carboxylation of biotin on its carrier protein (BCCP) and then the CO(2) group is transferred by the carboxyltransferase to acetyl-CoA to form malonyl-CoA. This is Acetyl-coenzyme A carboxylase carboxyl transferase subunit alpha from Polynucleobacter asymbioticus (strain DSM 18221 / CIP 109841 / QLW-P1DMWA-1) (Polynucleobacter necessarius subsp. asymbioticus).